Reading from the N-terminus, the 803-residue chain is Exo-1,4-beta-xylosidase xlnD (803 aa).

The first 18 residues, M1–S18, serve as a signal peptide directing secretion. N-linked (GlcNAc...) asparagine glycosylation is found at N21, N44, N85, N122, N140, and N234. D307 is an active-site residue. Residues N437, N474, N515, N611, N676, and N698 are each glycosylated (N-linked (GlcNAc...) asparagine).

The protein belongs to the glycosyl hydrolase 3 family.

The protein localises to the secreted. It catalyses the reaction Hydrolysis of (1-&gt;4)-beta-D-xylans, to remove successive D-xylose residues from the non-reducing termini.. Its pathway is glycan degradation; xylan degradation. Its function is as follows. Xylan 1,4-beta-xylosidase involved in the hydrolysis of xylan, a major structural heterogeneous polysaccharide found in plant biomass representing the second most abundant polysaccharide in the biosphere, after cellulose. This is Exo-1,4-beta-xylosidase xlnD (xlnD) from Emericella nidulans (strain FGSC A4 / ATCC 38163 / CBS 112.46 / NRRL 194 / M139) (Aspergillus nidulans).